Reading from the N-terminus, the 267-residue chain is Thiamine thiazole synthase (267 aa).

NAD(+) contacts are provided by residues Ser-41, 60–61 (ER), Gly-68, Val-132, and 160–162 (HVD). Fe cation-binding residues include Asp-162 and His-177. Met-227 is an NAD(+) binding site. Position 237 (Arg-237) interacts with glycine.

This sequence belongs to the THI4 family. In terms of assembly, homooctamer; tetramer of dimers. Fe(2+) serves as cofactor.

It carries out the reaction hydrogen sulfide + glycine + NAD(+) = ADP-5-ethyl-4-methylthiazole-2-carboxylate + nicotinamide + 3 H2O + H(+). The protein operates within cofactor biosynthesis; thiamine diphosphate biosynthesis. Functionally, involved in the biosynthesis of the thiazole moiety of thiamine. Catalyzes the conversion of NAD and glycine to adenosine diphosphate 5-(2-hydroxyethyl)-4-methylthiazole-2-carboxylate (ADT), an adenylated thiazole intermediate, using free sulfide as a source of sulfur. The chain is Thiamine thiazole synthase from Saccharolobus islandicus (strain M.14.25 / Kamchatka #1) (Sulfolobus islandicus).